Consider the following 266-residue polypeptide: Imidazole glycerol phosphate synthase subunit HisF (266 aa).

Catalysis depends on residues D11 and D130. Positions 134–157 are disordered; that stretch reads RTPEEAARPGPDGAPRGEGWDVYS.

The protein belongs to the HisA/HisF family. Heterodimer of HisH and HisF.

It localises to the cytoplasm. It catalyses the reaction 5-[(5-phospho-1-deoxy-D-ribulos-1-ylimino)methylamino]-1-(5-phospho-beta-D-ribosyl)imidazole-4-carboxamide + L-glutamine = D-erythro-1-(imidazol-4-yl)glycerol 3-phosphate + 5-amino-1-(5-phospho-beta-D-ribosyl)imidazole-4-carboxamide + L-glutamate + H(+). It functions in the pathway amino-acid biosynthesis; L-histidine biosynthesis; L-histidine from 5-phospho-alpha-D-ribose 1-diphosphate: step 5/9. Its function is as follows. IGPS catalyzes the conversion of PRFAR and glutamine to IGP, AICAR and glutamate. The HisF subunit catalyzes the cyclization activity that produces IGP and AICAR from PRFAR using the ammonia provided by the HisH subunit. The chain is Imidazole glycerol phosphate synthase subunit HisF from Paracidovorax citrulli (strain AAC00-1) (Acidovorax citrulli).